The primary structure comprises 86 residues: Photosystem I reaction center subunit PsaK 1 (86 aa).

Positions 1–8 (MLTSTLLA) are excised as a propeptide. 2 helical membrane-spanning segments follow: residues 14–34 (LEWSPTVGIIMVIANVIAITF) and 60–80 (PALLATTAFGHILGVGLVLGL).

The protein belongs to the PsaG/PsaK family. As to quaternary structure, the cyanobacterial PSI reaction center is composed of one copy each of PsaA,B,C,D,E,F,I,J,K,L,M and X, and forms dimeric and tetrameric complexes.

It is found in the cellular thylakoid membrane. This Nostoc sp. (strain PCC 7120 / SAG 25.82 / UTEX 2576) protein is Photosystem I reaction center subunit PsaK 1 (psaK1).